A 639-amino-acid chain; its full sequence is Mediator of RNA polymerase II transcription subunit 17 (639 aa).

Polar residues predominate over residues 32–43 (ASATVTTNGTTA). Disordered regions lie at residues 32-68 (ASAT…EEHS) and 130-159 (MGDA…NNDS). A compositionally biased stretch (low complexity) spans 48–57 (DSGSQQSVSS). Residues 58–68 (APIQQNSEEHS) show a composition bias toward polar residues. Positions 245–271 (WKLRSLEDSKALLKENYAKLQKSLEVE) form a coiled coil.

Belongs to the Mediator complex subunit 17 family. As to quaternary structure, component of the Mediator complex.

Its subcellular location is the nucleus. Its function is as follows. Component of the Mediator complex, a coactivator involved in the regulated transcription of nearly all RNA polymerase II-dependent genes. Mediator functions as a bridge to convey information from gene-specific regulatory proteins to the basal RNA polymerase II transcription machinery. Mediator is recruited to promoters by direct interactions with regulatory proteins and serves as a scaffold for the assembly of a functional preinitiation complex with RNA polymerase II and the general transcription factors. In Eremothecium gossypii (strain ATCC 10895 / CBS 109.51 / FGSC 9923 / NRRL Y-1056) (Yeast), this protein is Mediator of RNA polymerase II transcription subunit 17 (SRB4).